A 300-amino-acid polypeptide reads, in one-letter code: Cation-efflux pump FieF (300 aa).

Transmembrane regions (helical) follow at residues 12-32, 39-59, 82-102, and 114-134; these read AAIAATAMALALLLIKIFAWW, ILAALVDSLVDIAASLTNLLV, AALAQSMFISGSALFLFLTSI, and PGVGIGVTVIALICTIILVTF. Asp45 and Asp49 together coordinate Zn(2+). Residues His153 and Asp157 each coordinate Zn(2+). The next 2 helical transmembrane spans lie at 156–176 and 178–198; these read SDVMMNGAILIALGLSWYGWH and ADALFALGIGIYILYSALRMG.

Belongs to the cation diffusion facilitator (CDF) transporter (TC 2.A.4) family. FieF subfamily. Homodimer.

The protein resides in the cell inner membrane. It carries out the reaction Zn(2+)(in) + H(+)(out) = Zn(2+)(out) + H(+)(in). The catalysed reaction is Cd(2+)(in) + H(+)(out) = Cd(2+)(out) + H(+)(in). It catalyses the reaction Fe(2+)(in) + H(+)(out) = Fe(2+)(out) + H(+)(in). Divalent metal cation transporter which exports Zn(2+), Cd(2+) and possibly Fe(2+). May be involved in zinc and iron detoxification by efflux. This chain is Cation-efflux pump FieF, found in Salmonella arizonae (strain ATCC BAA-731 / CDC346-86 / RSK2980).